A 591-amino-acid polypeptide reads, in one-letter code: Indole-3-acetic acid-amido synthetase GH3.10 (591 aa).

Belongs to the IAA-amido conjugating enzyme family. In terms of tissue distribution, expressed in cotyledons and hypocotyls.

Catalyzes the synthesis of indole-3-acetic acid (IAA)-amino acid conjugates, providing a mechanism for the plant to cope with the presence of excess auxin. Involved in red light-specific hypocotyl elongation. May act downstream of a red light signal transduction and determine the degree of hypocotyl elongation. This Arabidopsis thaliana (Mouse-ear cress) protein is Indole-3-acetic acid-amido synthetase GH3.10.